Reading from the N-terminus, the 222-residue chain is Putative ankyrin repeat protein L36 (222 aa).

ANK repeat units follow at residues 1–14 (MVKYLVAQGVNVDA), 15–44 (QNSRALCLACKYGYINIAYFLMHEGANIYA), 45–74 (NDNHPIRLAAEYGHLSIVKLLIYHNANIRA), 76–104 (EDSALRMAAKRNKLEVVKYIIEKIGTNYE), 105–134 (YSDYPLAYAAGKGHIEMIEYLLSIGEKITD), 136–161 (AMFMAINNGHVGTVKYLIDESQSLPC), and 163–191 (SYSELAKITRKGHLEMIKLLNNRGIKINK).

This Acanthamoeba polyphaga (Amoeba) protein is Putative ankyrin repeat protein L36.